Consider the following 241-residue polypeptide: Lysoplasmalogenase TMEM86A (241 aa).

Residues 1–13 (MVSPVTVVKSEGP) lie on the Cytoplasmic side of the membrane. A helical membrane pass occupies residues 14-30 (KLVPFFKATCVYFVLWL). The Extracellular segment spans residues 31–36 (PSSSPS). The helical transmembrane segment at 37 to 59 (WVSALIKCLPIFCLWLFLLAHGV) threads the bilayer. The Cytoplasmic segment spans residues 60–67 (RFLLAHPS). A helical transmembrane segment spans residues 68–87 (ASLIFVGLVFSAVGDAFLIW). The Extracellular portion of the chain corresponds to 88 to 96 (QDHGYFEHG). Residues 97-113 (LLMFAVAHILYAAAFGM) form a helical membrane-spanning segment. Residues 114-119 (RPLALR) lie on the Cytoplasmic side of the membrane. Residues 120 to 136 (TGLVIGVLSGLCYALLY) traverse the membrane as a helical segment. The Extracellular portion of the chain corresponds to 137–142 (PGLSGA). A helical membrane pass occupies residues 143–159 (FTYLVGVYVALISFMGW). At 160-176 (RAMAGLRLVGAAWRWTE) the chain is on the cytoplasmic side. Residues 177–195 (LAAGGGALLFILSDLTIAL) traverse the membrane as a helical segment. Over 196–206 (NKFCFPVPYSR) the chain is Extracellular. The chain crosses the membrane as a helical span at residues 207–225 (ALIMSTYYAAQMLIALSAV). Topologically, residues 226-241 (ESREPVGEDYRLSKAD) are cytoplasmic.

The protein belongs to the TMEM86 family. In terms of tissue distribution, highly expressed in the jejunum, white adipose tissue, kidney and macrophages.

The protein localises to the endoplasmic reticulum membrane. It carries out the reaction a 1-O-(1Z-alkenyl)-sn-glycero-3-phosphocholine + H2O = a 2,3-saturated aldehyde + sn-glycerol 3-phosphocholine. It catalyses the reaction a 1-O-(1Z-alkenyl)-sn-glycero-3-phosphoethanolamine + H2O = a 2,3-saturated aldehyde + sn-glycero-3-phosphoethanolamine. Functionally, catalyzes the hydrolysis of the vinyl ether bond of choline or ethanolamine lysoplasmalogens, forming fatty aldehyde and glycerophosphocholine or glycerophosphoethanolamine, respectively and is specific for the sn-2-deacylated (lyso) form of plasmalogen. Plays an important role in lysoplasmalogen metabolism in the adipocyte tissue and macrophages. The polypeptide is Lysoplasmalogenase TMEM86A (Tmem86a) (Mus musculus (Mouse)).